Reading from the N-terminus, the 88-residue chain is Small ribosomal subunit protein bS20 (88 aa).

The tract at residues 1–22 (MANTPSAKKAVNKIAKRTQVNK) is disordered.

It belongs to the bacterial ribosomal protein bS20 family.

In terms of biological role, binds directly to 16S ribosomal RNA. The protein is Small ribosomal subunit protein bS20 of Bartonella bacilliformis (strain ATCC 35685 / KC583 / Herrer 020/F12,63).